Reading from the N-terminus, the 434-residue chain is Trigger factor (434 aa).

In terms of domain architecture, PPIase FKBP-type spans 160–245; it reads GDKVKMNFVG…LTEVQAANLP (86 aa).

The protein belongs to the FKBP-type PPIase family. Tig subfamily.

The protein resides in the cytoplasm. It catalyses the reaction [protein]-peptidylproline (omega=180) = [protein]-peptidylproline (omega=0). In terms of biological role, involved in protein export. Acts as a chaperone by maintaining the newly synthesized protein in an open conformation. Functions as a peptidyl-prolyl cis-trans isomerase. This chain is Trigger factor, found in Shewanella baltica (strain OS185).